Consider the following 275-residue polypeptide: Anthracycline biosynthesis protein DauV (275 aa).

VOC domains are found at residues 8–136 (APAW…VWRK) and 150–263 (SVGW…VVEL).

It participates in antibiotic biosynthesis; daunorubicin biosynthesis. Its pathway is antibiotic biosynthesis; carminomycin biosynthesis. Functionally, involved in the biosynthesis of the anthracyclines carminomycin and daunorubicin (daunomycin) which are aromatic polyketide antibiotics that exhibit high cytotoxicity and are widely applied in the chemotherapy of a variety of cancers. Acts jointly with DoxA in the conversion of 13-deoxycarminomycin and 13-deoxydaunorubicin to yield carminomycin and daunorubicin, respectively. The chain is Anthracycline biosynthesis protein DauV (dauV) from Streptomyces sp. (strain C5).